Reading from the N-terminus, the 505-residue chain is Maturase K (505 aa).

The protein belongs to the intron maturase 2 family. MatK subfamily.

The protein resides in the plastid. The protein localises to the chloroplast. Its function is as follows. Usually encoded in the trnK tRNA gene intron. Probably assists in splicing its own and other chloroplast group II introns. This is Maturase K from Ulmus parvifolia (Chinese elm).